The sequence spans 95 residues: Aspartyl/glutamyl-tRNA(Asn/Gln) amidotransferase subunit C (95 aa).

This sequence belongs to the GatC family. As to quaternary structure, heterotrimer of A, B and C subunits.

It carries out the reaction L-glutamyl-tRNA(Gln) + L-glutamine + ATP + H2O = L-glutaminyl-tRNA(Gln) + L-glutamate + ADP + phosphate + H(+). It catalyses the reaction L-aspartyl-tRNA(Asn) + L-glutamine + ATP + H2O = L-asparaginyl-tRNA(Asn) + L-glutamate + ADP + phosphate + 2 H(+). Allows the formation of correctly charged Asn-tRNA(Asn) or Gln-tRNA(Gln) through the transamidation of misacylated Asp-tRNA(Asn) or Glu-tRNA(Gln) in organisms which lack either or both of asparaginyl-tRNA or glutaminyl-tRNA synthetases. The reaction takes place in the presence of glutamine and ATP through an activated phospho-Asp-tRNA(Asn) or phospho-Glu-tRNA(Gln). The protein is Aspartyl/glutamyl-tRNA(Asn/Gln) amidotransferase subunit C of Azorhizobium caulinodans (strain ATCC 43989 / DSM 5975 / JCM 20966 / LMG 6465 / NBRC 14845 / NCIMB 13405 / ORS 571).